The chain runs to 68 residues: Ribosome modulation factor (68 aa).

It belongs to the ribosome modulation factor family.

Its subcellular location is the cytoplasm. In terms of biological role, during stationary phase, converts 70S ribosomes to an inactive dimeric form (100S ribosomes). The chain is Ribosome modulation factor from Saccharophagus degradans (strain 2-40 / ATCC 43961 / DSM 17024).